The chain runs to 426 residues: Serine--tRNA ligase (426 aa).

Residues 1–15 (MIDVKDLSENPDKFR) are compositionally biased toward basic and acidic residues. The segment at 1-20 (MIDVKDLSENPDKFRASQRA) is disordered. Residue 228-230 (TSE) coordinates L-serine. Residues 259-261 (RRE) and Val-275 contribute to the ATP site. Glu-282 is an L-serine binding site. Position 346–349 (346–349 (ELTS)) interacts with ATP. Residue Thr-386 participates in L-serine binding.

The protein belongs to the class-II aminoacyl-tRNA synthetase family. Type-1 seryl-tRNA synthetase subfamily. Homodimer. The tRNA molecule binds across the dimer.

The protein resides in the cytoplasm. The catalysed reaction is tRNA(Ser) + L-serine + ATP = L-seryl-tRNA(Ser) + AMP + diphosphate + H(+). It carries out the reaction tRNA(Sec) + L-serine + ATP = L-seryl-tRNA(Sec) + AMP + diphosphate + H(+). It participates in aminoacyl-tRNA biosynthesis; selenocysteinyl-tRNA(Sec) biosynthesis; L-seryl-tRNA(Sec) from L-serine and tRNA(Sec): step 1/1. Catalyzes the attachment of serine to tRNA(Ser). Is also able to aminoacylate tRNA(Sec) with serine, to form the misacylated tRNA L-seryl-tRNA(Sec), which will be further converted into selenocysteinyl-tRNA(Sec). The protein is Serine--tRNA ligase of Paenarthrobacter aurescens (strain TC1).